The primary structure comprises 364 residues: Aminomethyltransferase (364 aa).

It belongs to the GcvT family. In terms of assembly, the glycine cleavage system is composed of four proteins: P, T, L and H.

The enzyme catalyses N(6)-[(R)-S(8)-aminomethyldihydrolipoyl]-L-lysyl-[protein] + (6S)-5,6,7,8-tetrahydrofolate = N(6)-[(R)-dihydrolipoyl]-L-lysyl-[protein] + (6R)-5,10-methylene-5,6,7,8-tetrahydrofolate + NH4(+). In terms of biological role, the glycine cleavage system catalyzes the degradation of glycine. This is Aminomethyltransferase from Salmonella paratyphi A (strain AKU_12601).